Consider the following 74-residue polypeptide: U3-agatoxin-Ao1b (74 aa).

Residues 1–20 (MKAAISLIIFFAILFVVIEA) form the signal peptide. A propeptide spanning residues 21–34 (ISYEEGKELFQKER) is cleaved from the precursor. Intrachain disulfides connect Cys-37–Cys-53, Cys-44–Cys-58, Cys-52–Cys-68, and Cys-60–Cys-66. Ser-72 bears the Serine amide mark.

This sequence belongs to the neurotoxin 07 (Beta/delta-agtx) family. 02 (aga-3) subfamily. In terms of tissue distribution, expressed by the venom gland.

The protein resides in the secreted. In terms of biological role, insecticidal neurotoxin that induces an irreversible spastic paralysis when injected into insects. Modifies presynaptic voltage-gated sodium channels (Nav), causing them to open at the normal resting potential of the nerve. This leads to spontaneous release of neurotransmitter and repetitive action potentials in motor neurons. The sequence is that of U3-agatoxin-Ao1b from Agelena orientalis (Funnel-web spider).